We begin with the raw amino-acid sequence, 195 residues long: Protein GrpE (195 aa).

This sequence belongs to the GrpE family. In terms of assembly, homodimer.

The protein localises to the cytoplasm. Participates actively in the response to hyperosmotic and heat shock by preventing the aggregation of stress-denatured proteins, in association with DnaK and GrpE. It is the nucleotide exchange factor for DnaK and may function as a thermosensor. Unfolded proteins bind initially to DnaJ; upon interaction with the DnaJ-bound protein, DnaK hydrolyzes its bound ATP, resulting in the formation of a stable complex. GrpE releases ADP from DnaK; ATP binding to DnaK triggers the release of the substrate protein, thus completing the reaction cycle. Several rounds of ATP-dependent interactions between DnaJ, DnaK and GrpE are required for fully efficient folding. This Francisella tularensis subsp. novicida (strain U112) protein is Protein GrpE.